The primary structure comprises 143 residues: Holo-[acyl-carrier-protein] synthase (143 aa).

D8 and E62 together coordinate Mg(2+).

This sequence belongs to the P-Pant transferase superfamily. AcpS family. Mg(2+) is required as a cofactor.

The protein localises to the cytoplasm. The enzyme catalyses apo-[ACP] + CoA = holo-[ACP] + adenosine 3',5'-bisphosphate + H(+). In terms of biological role, transfers the 4'-phosphopantetheine moiety from coenzyme A to a Ser of acyl-carrier-protein. In Cupriavidus metallidurans (strain ATCC 43123 / DSM 2839 / NBRC 102507 / CH34) (Ralstonia metallidurans), this protein is Holo-[acyl-carrier-protein] synthase.